Reading from the N-terminus, the 1403-residue chain is Eukaryotic translation initiation factor 4 gamma (1403 aa).

Polar residues-rich tracts occupy residues 1–11 (MSSKPPSNTPK), 19–39 (ASSQ…TATA), and 50–60 (EPTNTSRANAQ). Disordered stretches follow at residues 1–381 (MSSK…GSTP), 439–464 (SRSG…RNGF), 488–774 (VVVP…KRDL), and 861–1003 (AFSD…EALL). Serine 83 carries the post-translational modification Phosphoserine. The span at 109-137 (DNTSKPSANSSAERTSSQHQKPETSSQIG) shows a compositional bias: polar residues. Composition is skewed to low complexity over residues 190 to 208 (SGVS…SVTS) and 231 to 248 (PRPT…ANGA). Residues 249–269 (PTNKPSTDINTTDPATQTTQV) are compositionally biased toward polar residues. Positions 270–291 (SASNSPALSGSSTPSNTSSRSN) are enriched in low complexity. The segment covering 298 to 308 (FSEKRHYDRYG) has biased composition (basic and acidic residues). The segment covering 325–334 (NYNNSGNNRN) has biased composition (low complexity). 3 stretches are compositionally biased toward polar residues: residues 346 to 381 (RNYN…GSTP), 439 to 460 (SRSG…TLSP), and 493 to 508 (KNAS…SRAE). Phosphoserine occurs at positions 452, 455, 456, and 459. The span at 537 to 714 (IQEKAEAEAK…GKREADKNPE (178 aa)) shows a compositional bias: basic and acidic residues. Residues 720–737 (PLASSEANVDTSKQTNAT) show a composition bias toward polar residues. The segment covering 741-754 (VVDKTKVEKLKASE) has biased composition (basic and acidic residues). Residues 757-768 (STSSLSSPSHST) show a composition bias toward low complexity. Phosphoserine is present on residues serine 866 and serine 882. Residues 868–886 (RGMYSSSRQSSRSGSNTHS) are compositionally biased toward low complexity. Threonine 884 carries the phosphothreonine modification. 4 positions are modified to phosphoserine: serine 886, serine 911, serine 919, and serine 921. The residue at position 923 (tyrosine 923) is a Phosphotyrosine. The span at 986-995 (KLTEKPAETK) shows a compositional bias: basic and acidic residues. Residues 1009–1245 (QRKVKGSLNK…MDVMDSRKNG (237 aa)) form the MIF4G domain. The segment at 1266–1403 (AERKKALAES…QKDSNSKTSS (138 aa)) is disordered. Positions 1284 to 1295 (HGRDMNRGDSRM) are enriched in basic and acidic residues. Polar residues-rich tracts occupy residues 1302–1313 (PPFSSSDWSNNK), 1328–1341 (SGTQ…SLSS), and 1348–1358 (VSRTPSRQNSA). Residue serine 1333 is modified to Phosphoserine. The segment covering 1383–1403 (LEEHDHDNDGGQKDSNSKTSS) has biased composition (basic and acidic residues).

This sequence belongs to the eukaryotic initiation factor 4G family.

The protein localises to the cytoplasm. It localises to the perinuclear region. Component of the protein complex eIF4F, which is involved in the recognition of the mRNA cap, ATP-dependent unwinding of 5'-terminal secondary structure and recruitment of mRNA to the ribosome. The protein is Eukaryotic translation initiation factor 4 gamma (tif471) of Schizosaccharomyces pombe (strain 972 / ATCC 24843) (Fission yeast).